The chain runs to 521 residues: MAKAATPKTTAAAEAKPAAKAPAKKAAPKTTAAAKPAATKSGAPKAAAAGAIGHITQVIGAVVDVKFPEGQLPLILNALEVDNQGHRLVLEVAQHLGEDTVRTIAMDATEGLVRGQEARDTGEPIMVPVGVETLGRIMNVIGEPVDEAGPIKTKATRAIHQNAPEYIEQSTEAEILVTGIKVVDLLAPYAKGGKIGLFGGAGVGKTVLIMELINNVAKAHGGYSVFAGVGERTREGNDLYHEMIESGVNKLGGGEGSKAALVYGQMNEPPGARARVALSGLTVAENFRDQGQDVLFFVDNIFRFTQAGSEVSALLGRIPSAVGYQPTLATDMGAMQERITTTTKGSITSVQAIYVPADDLTDPAPATSFAHLDATTVLSRSIAEKGIYPAVDPLDSTSRMIDPKVVGEEHYAVARQVQSILQRYKALQDIIAILGMDELSEEDKLTVARARKIERFLSQPFFVAEVFTGSPGKLVDLADTIKGFKGLCAGDYDHLPEAAFYMVGSIEEALEKAKKLAAEAA.

Low complexity-rich tracts occupy residues 1–21 (MAKA…AAKA) and 28–42 (PKTT…TKSG). The disordered stretch occupies residues 1 to 42 (MAKAATPKTTAAAEAKPAAKAPAKKAAPKTTAAAKPAATKSG). Position 199–206 (199–206 (GGAGVGKT)) interacts with ATP.

It belongs to the ATPase alpha/beta chains family. F-type ATPases have 2 components, CF(1) - the catalytic core - and CF(0) - the membrane proton channel. CF(1) has five subunits: alpha(3), beta(3), gamma(1), delta(1), epsilon(1). CF(0) has three main subunits: a(1), b(2) and c(9-12). The alpha and beta chains form an alternating ring which encloses part of the gamma chain. CF(1) is attached to CF(0) by a central stalk formed by the gamma and epsilon chains, while a peripheral stalk is formed by the delta and b chains.

The protein localises to the cell inner membrane. The catalysed reaction is ATP + H2O + 4 H(+)(in) = ADP + phosphate + 5 H(+)(out). In terms of biological role, produces ATP from ADP in the presence of a proton gradient across the membrane. The catalytic sites are hosted primarily by the beta subunits. This Brucella abortus (strain 2308) protein is ATP synthase subunit beta.